Consider the following 452-residue polypeptide: Ribulose bisphosphate carboxylase large chain (452 aa).

The propeptide occupies 1 to 2 (MS). P3 carries the post-translational modification N-acetylproline. N6,N6,N6-trimethyllysine is present on K14. The substrate site is built by N123 and T173. The active-site Proton acceptor is K175. K177 lines the substrate pocket. 3 residues coordinate Mg(2+): K201, D203, and E204. At K201 the chain carries N6-carboxylysine. H294 acts as the Proton acceptor in catalysis. The substrate site is built by R295, X327, and S379.

This sequence belongs to the RuBisCO large chain family. Type I subfamily. As to quaternary structure, heterohexadecamer of 8 large chains and 8 small chains; disulfide-linked. The disulfide link is formed within the large subunit homodimers. The cofactor is Mg(2+). The disulfide bond which can form in the large chain dimeric partners within the hexadecamer appears to be associated with oxidative stress and protein turnover.

It localises to the plastid. Its subcellular location is the chloroplast. The enzyme catalyses 2 (2R)-3-phosphoglycerate + 2 H(+) = D-ribulose 1,5-bisphosphate + CO2 + H2O. The catalysed reaction is D-ribulose 1,5-bisphosphate + O2 = 2-phosphoglycolate + (2R)-3-phosphoglycerate + 2 H(+). Its function is as follows. RuBisCO catalyzes two reactions: the carboxylation of D-ribulose 1,5-bisphosphate, the primary event in carbon dioxide fixation, as well as the oxidative fragmentation of the pentose substrate in the photorespiration process. Both reactions occur simultaneously and in competition at the same active site. The polypeptide is Ribulose bisphosphate carboxylase large chain (Salvadora persica (Toothbrush tree)).